The sequence spans 65 residues: Large ribosomal subunit protein bL28 (65 aa).

The interval 1 to 26 is disordered; the sequence is MARRDDLTNKGPMSGNKRSHALNATK. Residues 17 to 26 are compositionally biased toward basic residues; the sequence is KRSHALNATK.

It belongs to the bacterial ribosomal protein bL28 family.

This is Large ribosomal subunit protein bL28 from Mycoplasma mobile (strain ATCC 43663 / 163K / NCTC 11711) (Mesomycoplasma mobile).